We begin with the raw amino-acid sequence, 438 residues long: MQTIYTKITDIKGNLITVEAEGASLGELVQIERADGRSSYASVLRFDARKVTLQVFGGTSGLSTGDKVIFLGRPMEVIYGDSLLGRRFNGTGKPIDHEDECFGEPIPITTPSFNPVCRIVPREMVRTNIPMIDMFNCLVKSQKIPIFSSSGENHNALLMRIAAQTDADIVIIGGMGLTFVDYNFFVEESQRLGFADKCVKFIHKAVDAPVECVLIPDMALACAERFALEQQKNVLVLLTDMTAFADALKEIAITMDQIPANRGYPGSLYSDLAVRYEKAVDIAQGGSITLISVTTMPGDDITHPVPDNTGFITEGQFYLKDNRIDPFGSLSRLKQLVIGKKTREDHGDLANALIRLYADSRKSAERMSMGFKLSNWDKKLLAFSELFEARLMSLEVNIPLEEALDIGWKILSQSFHSEEVGIKEQLIQKYWPKACLHK.

It belongs to the ATPase alpha/beta chains family.

Functionally, produces ATP from ADP in the presence of a proton gradient across the membrane. The V-type beta chain is a regulatory subunit. The protein is V-type ATP synthase beta chain of Chlamydia trachomatis serovar L2b (strain UCH-1/proctitis).